The chain runs to 104 residues: Large ribosomal subunit protein uL23 (104 aa).

This sequence belongs to the universal ribosomal protein uL23 family. As to quaternary structure, part of the 50S ribosomal subunit. Contacts protein L29, and trigger factor when it is bound to the ribosome.

Functionally, one of the early assembly proteins it binds 23S rRNA. One of the proteins that surrounds the polypeptide exit tunnel on the outside of the ribosome. Forms the main docking site for trigger factor binding to the ribosome. This is Large ribosomal subunit protein uL23 from Rhodospirillum rubrum (strain ATCC 11170 / ATH 1.1.1 / DSM 467 / LMG 4362 / NCIMB 8255 / S1).